The sequence spans 181 residues: Peptide deformylase (181 aa).

2 residues coordinate Fe cation: C103 and H145. Residue E146 is part of the active site. H149 contributes to the Fe cation binding site.

The protein belongs to the polypeptide deformylase family. Fe(2+) is required as a cofactor.

It catalyses the reaction N-terminal N-formyl-L-methionyl-[peptide] + H2O = N-terminal L-methionyl-[peptide] + formate. Functionally, removes the formyl group from the N-terminal Met of newly synthesized proteins. Requires at least a dipeptide for an efficient rate of reaction. N-terminal L-methionine is a prerequisite for activity but the enzyme has broad specificity at other positions. The polypeptide is Peptide deformylase (Orientia tsutsugamushi (strain Boryong) (Rickettsia tsutsugamushi)).